The primary structure comprises 89 residues: CRISPR-associated endoribonuclease Cas2 2 (89 aa).

A Mg(2+)-binding site is contributed by Asp-9.

This sequence belongs to the CRISPR-associated endoribonuclease Cas2 protein family. Homodimer, forms a heterotetramer with a Cas1 homodimer. Requires Mg(2+) as cofactor.

In terms of biological role, CRISPR (clustered regularly interspaced short palindromic repeat), is an adaptive immune system that provides protection against mobile genetic elements (viruses, transposable elements and conjugative plasmids). CRISPR clusters contain sequences complementary to antecedent mobile elements and target invading nucleic acids. CRISPR clusters are transcribed and processed into CRISPR RNA (crRNA). Functions as a ssRNA-specific endoribonuclease. Involved in the integration of spacer DNA into the CRISPR cassette. The protein is CRISPR-associated endoribonuclease Cas2 2 of Methanospirillum hungatei JF-1 (strain ATCC 27890 / DSM 864 / NBRC 100397 / JF-1).